We begin with the raw amino-acid sequence, 521 residues long: Probable feruloyl esterase B (521 aa).

An N-terminal signal peptide occupies residues 1 to 17; sequence MKVSSLLSVALPGAALA. 2 cysteine pairs are disulfide-bonded: cysteine 26–cysteine 72 and cysteine 61–cysteine 111. N-linked (GlcNAc...) asparagine glycans are attached at residues asparagine 37, asparagine 51, asparagine 77, asparagine 95, asparagine 144, and asparagine 177. 3 disulfide bridges follow: cysteine 184-cysteine 438, cysteine 253-cysteine 270, and cysteine 279-cysteine 288. Serine 185 functions as the Acyl-ester intermediate in the catalytic mechanism. The Ca(2+) site is built by aspartate 254, aspartate 257, alanine 259, aspartate 261, and isoleucine 263. 4 N-linked (GlcNAc...) asparagine glycosylation sites follow: asparagine 284, asparagine 347, asparagine 352, and asparagine 378. Catalysis depends on charge relay system residues aspartate 397 and histidine 437. Asparagine 488 and asparagine 511 each carry an N-linked (GlcNAc...) asparagine glycan. Residues cysteine 498 and cysteine 520 are joined by a disulfide bond.

This sequence belongs to the tannase family.

The protein localises to the secreted. The enzyme catalyses feruloyl-polysaccharide + H2O = ferulate + polysaccharide.. Involved in degradation of plant cell walls. Hydrolyzes the feruloyl-arabinose ester bond in arabinoxylans as well as the feruloyl-galactose and feruloyl-arabinose ester bonds in pectin. The sequence is that of Probable feruloyl esterase B (faeB) from Aspergillus niger (strain ATCC MYA-4892 / CBS 513.88 / FGSC A1513).